The following is a 313-amino-acid chain: Protein FixB (313 aa).

Position 255 to 283 (255 to 283 (LYLAVGISGQIQHMVGANASQTIFAINKD)) interacts with FAD.

Belongs to the ETF alpha-subunit/FixB family. In terms of assembly, heterodimer of FixA and FixB.

The protein operates within amine and polyamine metabolism; carnitine metabolism. In terms of biological role, required for anaerobic carnitine reduction. May bring reductant to CaiA. This is Protein FixB from Escherichia coli O7:K1 (strain IAI39 / ExPEC).